A 314-amino-acid chain; its full sequence is MTAQRKKISLIGAGNIGGTLAHMIALRELGDVILLDVSDGIPQGKALDITESSPIDRSNVNITGTNRYEDIKNSDAIIITAGIARKPGMSRDDLLQTNAAVMKEVGENIKKHSPNAFVIVVTNPLDAMVSVVYKSSSLPTNMIVGMAGVLDSARFRYFLASELNISVEDVSAFVLGGHGDTMVPLINYASIAGIPLTQIIEMGVITRGKVDEIVERTRNGGKEIVDLLKSGSAYYAPASSAISMLESYLKDKRRILPCAAYLNGEYGVKDLFIGVPTIIGKNGVEKVLEVKMNDSEQEMFYKSVSAVKELCQLN.

Residues 12–17 (GAGNIG) and Asp36 each bind NAD(+). Substrate is bound by residues Arg85 and Arg91. Residues Asn98 and 121 to 123 (VTN) contribute to the NAD(+) site. Residues Asn123 and Arg154 each contribute to the substrate site. The Proton acceptor role is filled by His178.

This sequence belongs to the LDH/MDH superfamily. MDH type 3 family.

The enzyme catalyses (S)-malate + NAD(+) = oxaloacetate + NADH + H(+). In terms of biological role, catalyzes the reversible oxidation of malate to oxaloacetate. This Wolbachia pipientis subsp. Culex pipiens (strain wPip) protein is Malate dehydrogenase.